The following is a 106-amino-acid chain: uncharacterized protein (106 aa).

This is an uncharacterized protein from Escherichia coli O6:H1 (strain CFT073 / ATCC 700928 / UPEC).